Here is a 114-residue protein sequence, read N- to C-terminus: uncharacterized protein (114 aa).

Positions 1 to 20 (MGLSRWHDKNSRPAEEKSEE) are enriched in basic and acidic residues. The interval 1-22 (MGLSRWHDKNSRPAEEKSEEMQ) is disordered.

In terms of biological role, may be involved in phosphatase regulation and/or generation of precursor metabolites and energy. This is an uncharacterized protein from Saccharomyces cerevisiae (strain ATCC 204508 / S288c) (Baker's yeast).